The primary structure comprises 129 residues: Small ribosomal subunit protein uS11 (129 aa).

The protein belongs to the universal ribosomal protein uS11 family. In terms of assembly, part of the 30S ribosomal subunit. Interacts with proteins S7 and S18. Binds to IF-3.

Located on the platform of the 30S subunit, it bridges several disparate RNA helices of the 16S rRNA. Forms part of the Shine-Dalgarno cleft in the 70S ribosome. This is Small ribosomal subunit protein uS11 from Azobacteroides pseudotrichonymphae genomovar. CFP2.